A 220-amino-acid polypeptide reads, in one-letter code: Large ribosomal subunit protein uL3 (220 aa).

Residues 61–81 (KGSKSNKYANKPAEGHAKKAD) form a disordered region.

This sequence belongs to the universal ribosomal protein uL3 family. Part of the 50S ribosomal subunit. Forms a cluster with proteins L14 and L19.

Its function is as follows. One of the primary rRNA binding proteins, it binds directly near the 3'-end of the 23S rRNA, where it nucleates assembly of the 50S subunit. This Staphylococcus epidermidis (strain ATCC 35984 / DSM 28319 / BCRC 17069 / CCUG 31568 / BM 3577 / RP62A) protein is Large ribosomal subunit protein uL3.